The primary structure comprises 132 residues: Small ribosomal subunit protein uS8 (132 aa).

It belongs to the universal ribosomal protein uS8 family. As to quaternary structure, part of the 30S ribosomal subunit. Contacts proteins S5 and S12.

One of the primary rRNA binding proteins, it binds directly to 16S rRNA central domain where it helps coordinate assembly of the platform of the 30S subunit. In Clostridium botulinum (strain ATCC 19397 / Type A), this protein is Small ribosomal subunit protein uS8.